Consider the following 840-residue polypeptide: N-acetyltransferase ESCO1 (840 aa).

A compositionally biased stretch (basic and acidic residues) spans 1 to 25 (MMSIQEKSKENSSKVTKKSDDKNSE). The tract at residues 1–188 (MMSIQEKSKE…VLEVKSDSKE (188 aa)) is disordered. 3 stretches are compositionally biased toward polar residues: residues 46-58 (KSQA…SKIN), 65-74 (RMSTRSSKAA), and 81-96 (KSIN…YSQE). A compositionally biased stretch (basic and acidic residues) spans 131–140 (VSRRSLRSRE). Over residues 141-153 (IQGQVQAVKQSLP) the composition is skewed to polar residues. A compositionally biased stretch (low complexity) spans 161-170 (SSTQSKSNKT). The segment covering 178–188 (KVLEVKSDSKE) has biased composition (basic and acidic residues). Ser200 is subject to Phosphoserine. 2 disordered regions span residues 221-300 (TQGS…KSKR) and 318-338 (NVEV…KPTE). A compositionally biased stretch (polar residues) spans 267–278 (HTQVNTNTTLPK). Residues 319-338 (VEVKKESSQMESVKEEKPTE) are compositionally biased toward basic and acidic residues. Residue Lys332 forms a Glycyl lysine isopeptide (Lys-Gly) (interchain with G-Cter in SUMO2) linkage. Ser412 is subject to Phosphoserine. Disordered stretches follow at residues 486-505 (ANEI…HSFD) and 542-582 (TGEN…KCNS). The span at 551 to 565 (APQQHSILSNQTSKS) shows a compositional bias: polar residues. A CCHH-type zinc finger spans residues 617 to 641 (VSCNVCGMLYTASNPEDETQHLLFH). Residues 772–774 (IWV), 780–785 (RKKIAS), and 812–814 (TPD) contribute to the acetyl-CoA site.

This sequence belongs to the acetyltransferase family. ECO subfamily. In terms of assembly, the subunit structure is controversial. Monomer. Homodimer. Phosphorylated during mitosis, when associated with chromosomes. In terms of tissue distribution, widely expressed. Expressed in heart, brain, liver, placenta, lung, kidney and pancreas. Highly expressed in muscle.

The protein resides in the nucleus. The protein localises to the chromosome. It catalyses the reaction L-lysyl-[protein] + acetyl-CoA = N(6)-acetyl-L-lysyl-[protein] + CoA + H(+). Its function is as follows. Acetyltransferase required for the establishment of sister chromatid cohesion. Couples the processes of cohesion and DNA replication to ensure that only sister chromatids become paired together. In contrast to the structural cohesins, the deposition and establishment factors are required only during S phase. Acts by mediating the acetylation of cohesin component SMC3. This chain is N-acetyltransferase ESCO1 (ESCO1), found in Homo sapiens (Human).